The chain runs to 658 residues: Threonine--tRNA ligase (658 aa).

The TGS domain maps to 1-63; sequence MDQITITFPD…DDNASIDFVA (63 aa). Residues 245–548 form a catalytic region; sequence DHRKLGRELD…LIEHYAGNFP (304 aa). Zn(2+)-binding residues include Cys341, His392, and His525.

The protein belongs to the class-II aminoacyl-tRNA synthetase family. Homodimer. Zn(2+) serves as cofactor.

The protein localises to the cytoplasm. It carries out the reaction tRNA(Thr) + L-threonine + ATP = L-threonyl-tRNA(Thr) + AMP + diphosphate + H(+). Catalyzes the attachment of threonine to tRNA(Thr) in a two-step reaction: L-threonine is first activated by ATP to form Thr-AMP and then transferred to the acceptor end of tRNA(Thr). Also edits incorrectly charged L-seryl-tRNA(Thr). The chain is Threonine--tRNA ligase from Rhodopseudomonas palustris (strain ATCC BAA-98 / CGA009).